The sequence spans 288 residues: Polyprenyl transferase eriF (288 aa).

A run of 6 helical transmembrane segments spans residues Ala24–Leu44, Tyr51–Val71, Ile101–Thr121, Cys145–Pro165, Phe215–Phe235, and Phe268–Ile288.

Belongs to the UbiA prenyltransferase family. Mg(2+) is required as a cofactor.

Its subcellular location is the membrane. Functionally, polyprenyl transferase; part of the gene cluster that mediates the biosynthesis of erinacines, cyathane-xylosides that show unique biological activities, including leishmanicidal activity, stimulating activity for nerve growth-factor synthesis, and agonistic activity toward the kappa opioid receptor. The role of eriF within the pathway has still to be determined. The first step of the erinacines biosynthesis pathway is catalyzed by the geranylgeranyl diphosphate (GGPP) synthase eriE via conversion of farnesyl pyrophosphate and isopentyl pyrophosphate into geranylgeranyl pyrophosphate (GGPP). GGPP is then substrate of the diterpene cyclase eriG for the production of cyatha-3,12-diene. The cytochrome P450 monooxygenase eriI then hydroxylates cyatha-3,12-diene at C-14 of the seven-membered ring to produce erinacol, which is further hydroxylated at C-15 by the cytochrome P450 monooxygenase eriC to yield cyathadiol. The cytochrome P450 monooxygenase eriA then catalyzes C-11 hydroxylation in the presence of the short chain dehydrogenase/reductase (SDR) eriH, which leads to the production of cyathatriol. The acetyltransferase eriL converts cyathatriol into 11-O-acetyl-cyathatriol. The SDR eriH catalyzes further oxidation of 11-O-acetyl-cyathatriol into 1-O-acetylcyathin A3. Finally, the glycosyl transferase eriJ tranfers xylose from UDP-xylose onto C-14 of 11-O-acetyl-cyathatriol to form eracine Q. EriJ is also able to convert 11-O-acetyl-cyathatriol to eracine Q2 by using UDP-D-glucose as cosubstrate, but at a lower rate. In Hericium erinaceus (Lion's mane mushroom), this protein is Polyprenyl transferase eriF.